A 201-amino-acid polypeptide reads, in one-letter code: Large ribosomal subunit protein bL25 (201 aa).

This sequence belongs to the bacterial ribosomal protein bL25 family. CTC subfamily. In terms of assembly, part of the 50S ribosomal subunit; part of the 5S rRNA/L5/L18/L25 subcomplex. Contacts the 5S rRNA. Binds to the 5S rRNA independently of L5 and L18.

This is one of the proteins that binds to the 5S RNA in the ribosome where it forms part of the central protuberance. This chain is Large ribosomal subunit protein bL25, found in Aromatoleum aromaticum (strain DSM 19018 / LMG 30748 / EbN1) (Azoarcus sp. (strain EbN1)).